The primary structure comprises 179 residues: Pyridoxal 5'-phosphate synthase subunit PdxT (179 aa).

48–50 (GES) contributes to the L-glutamine binding site. Catalysis depends on C79, which acts as the Nucleophile. L-glutamine contacts are provided by residues R101 and 127 to 128 (IR). Residues H163 and E165 each act as charge relay system in the active site.

It belongs to the glutaminase PdxT/SNO family. As to quaternary structure, in the presence of PdxS, forms a dodecamer of heterodimers. Only shows activity in the heterodimer.

It catalyses the reaction aldehydo-D-ribose 5-phosphate + D-glyceraldehyde 3-phosphate + L-glutamine = pyridoxal 5'-phosphate + L-glutamate + phosphate + 3 H2O + H(+). It carries out the reaction L-glutamine + H2O = L-glutamate + NH4(+). It functions in the pathway cofactor biosynthesis; pyridoxal 5'-phosphate biosynthesis. In terms of biological role, catalyzes the hydrolysis of glutamine to glutamate and ammonia as part of the biosynthesis of pyridoxal 5'-phosphate. The resulting ammonia molecule is channeled to the active site of PdxS. The polypeptide is Pyridoxal 5'-phosphate synthase subunit PdxT (Francisella tularensis subsp. novicida (strain U112)).